The chain runs to 95 residues: Small ribosomal subunit protein bS6 (95 aa).

The protein belongs to the bacterial ribosomal protein bS6 family.

Its function is as follows. Binds together with bS18 to 16S ribosomal RNA. The polypeptide is Small ribosomal subunit protein bS6 (Clostridium novyi (strain NT)).